The sequence spans 176 residues: Nascent polypeptide-associated complex subunit alpha (176 aa).

Residues 16–80 (PKNEKKAREL…AKVDDMNQRI (65 aa)) enclose the NAC-A/B domain. Positions 83–110 (AQAAQAAETDAHAGHTHSHGEEDKSPEA) are disordered. A compositionally biased stretch (basic and acidic residues) spans 91-110 (TDAHAGHTHSHGEEDKSPEA). In terms of domain architecture, UBA spans 138 to 175 (LDAKDIDIIVEQTQVSRAKAVKALRKHDGDMVNAIMEL).

It belongs to the NAC-alpha family. As to quaternary structure, part of the nascent polypeptide-associated complex (NAC), consisting of EGD2 and EGD1. NAC associates with ribosomes via EGD1.

The protein resides in the cytoplasm. It localises to the nucleus. Its function is as follows. Component of the nascent polypeptide-associated complex (NAC), a dynamic component of the ribosomal exit tunnel, protecting the emerging polypeptides from interaction with other cytoplasmic proteins to ensure appropriate nascent protein targeting. The NAC complex also promotes mitochondrial protein import by enhancing productive ribosome interactions with the outer mitochondrial membrane and blocks the inappropriate interaction of ribosomes translating non-secretory nascent polypeptides with translocation sites in the membrane of the endoplasmic reticulum. EGD2 may also be involved in transcription regulation. In Scheffersomyces stipitis (strain ATCC 58785 / CBS 6054 / NBRC 10063 / NRRL Y-11545) (Yeast), this protein is Nascent polypeptide-associated complex subunit alpha (EGD2).